Consider the following 286-residue polypeptide: 33 kDa chaperonin (286 aa).

2 disulfides stabilise this stretch: Cys225–Cys227 and Cys258–Cys261.

Belongs to the HSP33 family. Post-translationally, under oxidizing conditions two disulfide bonds are formed involving the reactive cysteines. Under reducing conditions zinc is bound to the reactive cysteines and the protein is inactive.

The protein localises to the cytoplasm. Redox regulated molecular chaperone. Protects both thermally unfolding and oxidatively damaged proteins from irreversible aggregation. Plays an important role in the bacterial defense system toward oxidative stress. This chain is 33 kDa chaperonin, found in Shewanella putrefaciens (strain CN-32 / ATCC BAA-453).